Here is a 453-residue protein sequence, read N- to C-terminus: tRNA modification GTPase MnmE (453 aa).

3 residues coordinate (6S)-5-formyl-5,6,7,8-tetrahydrofolate: Arg-28, Glu-86, and Lys-125. In terms of domain architecture, TrmE-type G spans 221–375; sequence GIKIAIVGEP…LIKYLEETSL (155 aa). K(+) is bound at residue Asn-231. Residues 231–236, 250–256, and 276–279 each bind GTP; these read NAGKSS, TNIPGTT, and DTAG. Ser-235 is a binding site for Mg(2+). 3 residues coordinate K(+): Thr-250, Ile-252, and Thr-255. Thr-256 is a binding site for Mg(2+). Residue Lys-453 coordinates (6S)-5-formyl-5,6,7,8-tetrahydrofolate.

Belongs to the TRAFAC class TrmE-Era-EngA-EngB-Septin-like GTPase superfamily. TrmE GTPase family. In terms of assembly, homodimer. Heterotetramer of two MnmE and two MnmG subunits. The cofactor is K(+).

The protein resides in the cytoplasm. In terms of biological role, exhibits a very high intrinsic GTPase hydrolysis rate. Involved in the addition of a carboxymethylaminomethyl (cmnm) group at the wobble position (U34) of certain tRNAs, forming tRNA-cmnm(5)s(2)U34. This Mycoplasmoides gallisepticum (strain R(low / passage 15 / clone 2)) (Mycoplasma gallisepticum) protein is tRNA modification GTPase MnmE.